A 1114-amino-acid chain; its full sequence is Extracellular sulfatase SULF-1 homolog (1114 aa).

The signal sequence occupies residues 1 to 25 (MMRHSSLRLIIGGLILLLFVLNVFS). Ca(2+) is bound by residues D62, D63, and C98. Catalysis depends on C98, which acts as the Nucleophile. C98 bears the 3-oxoalanine (Cys) mark. Residues N122, N159, N181, N208, and N251 are each glycosylated (N-linked (GlcNAc...) asparagine). Ca(2+) is bound by residues D327 and H328. N447 carries an N-linked (GlcNAc...) asparagine glycan. The segment covering 466–479 (SSSSTAATLMSSTA) has biased composition (low complexity). The tract at residues 466–504 (SSSSTAATLMSSTAQQPEDGEEEVETDNEEDDVDGDGAM) is disordered. Over residues 483–502 (EDGEEEVETDNEEDDVDGDG) the composition is skewed to acidic residues. Residues N683, N713, and N743 are each glycosylated (N-linked (GlcNAc...) asparagine). Residues 781–812 (KQLRESNKQALAAGRRNDNRRRNDQSVLDSGA) are disordered. The span at 795–804 (RRNDNRRRND) shows a compositional bias: basic and acidic residues. N-linked (GlcNAc...) asparagine glycosylation is present at N817. The segment covering 876–895 (ADSKEMAREARRKLKEERQR) has biased composition (basic and acidic residues). A disordered region spans residues 876-901 (ADSKEMAREARRKLKEERQRKKERKR). N-linked (GlcNAc...) asparagine glycans are attached at residues N945, N955, and N974. The segment at 1073–1114 (LSKYNRLTGSQQSHMKRRPWKQTPLQQSPRFLRTHSVTPAQA) is disordered. Polar residues predominate over residues 1095 to 1114 (TPLQQSPRFLRTHSVTPAQA).

It belongs to the sulfatase family. Requires Ca(2+) as cofactor. Post-translationally, the conversion to 3-oxoalanine (also known as C-formylglycine, FGly), of a serine or cysteine residue in prokaryotes and of a cysteine residue in eukaryotes, is critical for catalytic activity.

It is found in the endoplasmic reticulum. The protein localises to the golgi apparatus. It localises to the golgi stack. Its subcellular location is the cell surface. In Drosophila melanogaster (Fruit fly), this protein is Extracellular sulfatase SULF-1 homolog (Sulf1).